The chain runs to 379 residues: Sialidase-2 (379 aa).

Residues 20–23 (YRIP) carry the FRIP motif motif. Substrate contacts are provided by R21 and R41. D46 acts as the Proton acceptor in catalysis. One copy of the BNR 1 repeat lies at 127–138 (ITSTDHGKTWSA). Positions 179 and 181 each coordinate substrate. One copy of the BNR 2 repeat lies at 197–208 (FLSHDHGSTWEL). Substrate-binding residues include E218, R237, and R303. Y333 functions as the Nucleophile in the catalytic mechanism. The active site involves E354.

This sequence belongs to the glycosyl hydrolase 33 family.

The protein resides in the cytoplasm. The enzyme catalyses Hydrolysis of alpha-(2-&gt;3)-, alpha-(2-&gt;6)-, alpha-(2-&gt;8)- glycosidic linkages of terminal sialic acid residues in oligosaccharides, glycoproteins, glycolipids, colominic acid and synthetic substrates.. Functionally, catalyzes the removal of sialic acid (N-acetylneuraminic acid) moieties from glycoproteins, oligosaccharides and gangliosides. In Cricetulus griseus (Chinese hamster), this protein is Sialidase-2 (NEU2).